The sequence spans 381 residues: Cytochrome b (381 aa).

Helical transmembrane passes span Phe34–Met54, Trp78–Ile99, Trp114–Leu134, and Phe179–Leu199. His84 and His98 together coordinate heme b. Heme b contacts are provided by His183 and His197. His202 contacts a ubiquinone. The next 4 membrane-spanning stretches (helical) occupy residues Tyr227–Leu247, Leu289–His309, Leu321–Gly341, and Phe348–Pro368.

The protein belongs to the cytochrome b family. As to quaternary structure, the cytochrome bc1 complex contains 3 respiratory subunits (MT-CYB, CYC1 and UQCRFS1), 2 core proteins (UQCRC1 and UQCRC2) and probably 6 low-molecular weight proteins. Requires heme b as cofactor.

It localises to the mitochondrion inner membrane. Its function is as follows. Component of the ubiquinol-cytochrome c reductase complex (complex III or cytochrome b-c1 complex) that is part of the mitochondrial respiratory chain. The b-c1 complex mediates electron transfer from ubiquinol to cytochrome c. Contributes to the generation of a proton gradient across the mitochondrial membrane that is then used for ATP synthesis. This Carcharodon carcharias (Great white shark) protein is Cytochrome b (mt-cyb).